We begin with the raw amino-acid sequence, 64 residues long: Cold shock protein CapA (64 aa).

Residues 7–64 (GTVKWFNDEKGFGFITPQGGGDDLFVHFKAIESDGFKSLKEGQTVSFVAEKGQKGMQA) enclose the CSD domain.

The protein resides in the cytoplasm. In terms of biological role, affects cell viability at low temperatures. The sequence is that of Cold shock protein CapA (capA) from Pseudomonas fragi.